The following is a 261-amino-acid chain: Carnitinyl-CoA dehydratase (261 aa).

E111 (nucleophile) is an active-site residue. The active-site Proton acceptor is E131.

Belongs to the enoyl-CoA hydratase/isomerase family.

The enzyme catalyses (R)-carnitinyl-CoA = crotonobetainyl-CoA + H2O. It functions in the pathway amine and polyamine metabolism; carnitine metabolism. In terms of biological role, catalyzes the reversible dehydration of L-carnitinyl-CoA to crotonobetainyl-CoA. The polypeptide is Carnitinyl-CoA dehydratase (Salmonella dublin (strain CT_02021853)).